The sequence spans 255 residues: 3-dehydroquinate dehydratase (255 aa).

3-dehydroquinate contacts are provided by residues Glu-47–Arg-49 and Arg-83. Residue His-145 is the Proton donor/acceptor of the active site. Lys-172 serves as the catalytic Schiff-base intermediate with substrate. Residues Arg-215, Ser-234, and Gln-238 each coordinate 3-dehydroquinate.

It belongs to the type-I 3-dehydroquinase family. As to quaternary structure, homodimer.

The catalysed reaction is 3-dehydroquinate = 3-dehydroshikimate + H2O. It participates in metabolic intermediate biosynthesis; chorismate biosynthesis; chorismate from D-erythrose 4-phosphate and phosphoenolpyruvate: step 3/7. In terms of biological role, involved in the third step of the chorismate pathway, which leads to the biosynthesis of aromatic amino acids. Catalyzes the cis-dehydration of 3-dehydroquinate (DHQ) and introduces the first double bond of the aromatic ring to yield 3-dehydroshikimate. This is 3-dehydroquinate dehydratase from Clostridium kluyveri (strain NBRC 12016).